The primary structure comprises 342 residues: Thymidylate synthase (342 aa).

DUMP is bound by residues Arg-31 and 156–157 (RR). Cys-176 (nucleophile) is an active-site residue. DUMP is bound by residues 196–199 (RSGD), Asn-207, and 237–239 (HVY). Asp-199 lines the (6R)-5,10-methylene-5,6,7,8-tetrahydrofolate pocket. A (6R)-5,10-methylene-5,6,7,8-tetrahydrofolate-binding site is contributed by Ala-341.

The protein belongs to the thymidylate synthase family. Bacterial-type ThyA subfamily. As to quaternary structure, homodimer.

The protein localises to the cytoplasm. The catalysed reaction is dUMP + (6R)-5,10-methylene-5,6,7,8-tetrahydrofolate = 7,8-dihydrofolate + dTMP. Its pathway is pyrimidine metabolism; dTTP biosynthesis. Its function is as follows. Catalyzes the reductive methylation of 2'-deoxyuridine-5'-monophosphate (dUMP) to 2'-deoxythymidine-5'-monophosphate (dTMP) while utilizing 5,10-methylenetetrahydrofolate (mTHF) as the methyl donor and reductant in the reaction, yielding dihydrofolate (DHF) as a by-product. This enzymatic reaction provides an intracellular de novo source of dTMP, an essential precursor for DNA biosynthesis. The chain is Thymidylate synthase from Haloferax volcanii (Halobacterium volcanii).